The sequence spans 439 residues: Maintenance of mitochondrial morphology protein 1 (439 aa).

Residues methionine 1–glycine 76 are Lumenal-facing. Residues leucine 77 to phenylalanine 97 form a helical membrane-spanning segment. At alanine 98 to isoleucine 439 the chain is on the cytoplasmic side. Disordered stretches follow at residues lysine 125–serine 145, methionine 309–threonine 336, and arginine 405–alanine 425. Positions alanine 165–proline 395 constitute an SMP-LTD domain. 2 stretches are compositionally biased toward low complexity: residues glutamate 315 to asparagine 326 and lysine 410 to serine 424.

It belongs to the MMM1 family. Homodimer. Component of the ER-mitochondria encounter structure (ERMES) or MDM complex, composed of MMM1, MDM10, MDM12 and MDM34. An MMM1 homodimer associates with one molecule of MDM12 on each side in a pairwise head-to-tail manner, and the SMP-LTD domains of MMM1 and MDM12 generate a continuous hydrophobic tunnel for phospholipid trafficking.

The protein resides in the endoplasmic reticulum membrane. Its function is as follows. Component of the ERMES/MDM complex, which serves as a molecular tether to connect the endoplasmic reticulum (ER) and mitochondria. Components of this complex are involved in the control of mitochondrial shape and protein biogenesis, and function in nonvesicular lipid trafficking between the ER and mitochondria. The MDM12-MMM1 subcomplex functions in the major beta-barrel assembly pathway that is responsible for biogenesis of all outer membrane beta-barrel proteins, and acts in a late step after the SAM complex. The MDM10-MDM12-MMM1 subcomplex further acts in the TOM40-specific pathway after the action of the MDM12-MMM1 complex. Essential for establishing and maintaining the structure of mitochondria and maintenance of mtDNA nucleoids. The sequence is that of Maintenance of mitochondrial morphology protein 1 from Candida albicans (strain SC5314 / ATCC MYA-2876) (Yeast).